The chain runs to 66 residues: Large ribosomal subunit protein uL29 (66 aa).

The protein belongs to the universal ribosomal protein uL29 family.

The protein is Large ribosomal subunit protein uL29 of Thermococcus onnurineus (strain NA1).